We begin with the raw amino-acid sequence, 103 residues long: AAFALPAFASFEKDVITPAALEAVLNRKAPLSNIMMENDAILNVIANVKTVISNPVLEEALLKTNHGVNGIPCGESCVWIPCLTSTVGCSCKSKVCYRNSLDN.

The N-terminal stretch at 1–9 is a signal peptide; the sequence is AAFALPAFA. The propeptide occupies 10 to 69; it reads SFEKDVITPAALEAVLNRKAPLSNIMMENDAILNVIANVKTVISNPVLEEALLKTNHGVN. A cross-link (cyclopeptide (Gly-Asn)) is located at residues 70–99; it reads GIPCGESCVWIPCLTSTVGCSCKSKVCYRN. Disulfide bonds link cysteine 73–cysteine 89, cysteine 77–cysteine 91, and cysteine 82–cysteine 96. The propeptide occupies 100–103; that stretch reads SLDN.

Post-translationally, this is a cyclic peptide.

Its function is as follows. Probably participates in a plant defense mechanism. In Viola biflora (Yellow wood violet), this protein is Cyclotide vibi-I.